Consider the following 404-residue polypeptide: MQIGQRLGTPLSPSATRVMLLGAGELGKEVIIALQRLGVEVIAVDRYPNAPGHQVAHRAHVIDMTDPDALRALVDAERPHLVVPEIEAIATDALAAIEAAGVCEVIPTARATQLTMNREGIRRLAAEELGLPTSPYAFAQSFDEFAAAVARIGFPCVVKPVMSSSGKGQSVLRSEADIEPAWRYAMAGGRVNHGRVIVEGFIRFDYEITQLTVRAIDPASGQTRTSFCAPIGHLQVAGDYVESWQPQPMSAKALERSRDIAHRVTSALGGRGIFGVELFVRGDDVWFSEVSPRPHDTGLVTLASQRQSEFELHARAILGLPVEPALATPAASAVIYGGLDEAGIAFEGVRDALAVPGADLRLFGKPESFAKRRMGVALATGANVDEARERAKRAAAAVRPVSAR.

Residues 25-26 (EL) and E85 each bind N(1)-(5-phospho-beta-D-ribosyl)glycinamide. Residues R118, K159, 164 to 169 (SSGKGQ), 199 to 202 (EGFI), and E207 contribute to the ATP site. The 196-residue stretch at 123–318 (RLAAEELGLP…EFELHARAIL (196 aa)) folds into the ATP-grasp domain. Residues E277 and E289 each contribute to the Mg(2+) site. Residues D296, K365, and 372 to 373 (RR) contribute to the N(1)-(5-phospho-beta-D-ribosyl)glycinamide site.

Belongs to the PurK/PurT family. As to quaternary structure, homodimer.

It catalyses the reaction N(1)-(5-phospho-beta-D-ribosyl)glycinamide + formate + ATP = N(2)-formyl-N(1)-(5-phospho-beta-D-ribosyl)glycinamide + ADP + phosphate + H(+). Its pathway is purine metabolism; IMP biosynthesis via de novo pathway; N(2)-formyl-N(1)-(5-phospho-D-ribosyl)glycinamide from N(1)-(5-phospho-D-ribosyl)glycinamide (formate route): step 1/1. Functionally, involved in the de novo purine biosynthesis. Catalyzes the transfer of formate to 5-phospho-ribosyl-glycinamide (GAR), producing 5-phospho-ribosyl-N-formylglycinamide (FGAR). Formate is provided by PurU via hydrolysis of 10-formyl-tetrahydrofolate. This chain is Formate-dependent phosphoribosylglycinamide formyltransferase, found in Burkholderia mallei (strain NCTC 10247).